The following is a 380-amino-acid chain: O-phospho-L-seryl-tRNA:Cys-tRNA synthase (380 aa).

Pyridoxal 5'-phosphate is bound by residues Ala86 to Arg87, Asn192, and Ser215 to His217. Lys218 is modified (N6-(pyridoxal phosphate)lysine).

Belongs to the SepCysS family. As to quaternary structure, homodimer. Interacts with SepRS. Pyridoxal 5'-phosphate serves as cofactor.

It catalyses the reaction O-phospho-L-seryl-tRNA(Cys) + hydrogen sulfide + H(+) = L-cysteinyl-tRNA(Cys) + phosphate. Functionally, converts O-phospho-L-seryl-tRNA(Cys) (Sep-tRNA(Cys)) to L-cysteinyl-tRNA(Cys) (Cys-tRNA(Cys)). This chain is O-phospho-L-seryl-tRNA:Cys-tRNA synthase, found in Methanococcus maripaludis (strain C6 / ATCC BAA-1332).